The sequence spans 439 residues: Proline--tRNA ligase (439 aa).

Belongs to the class-II aminoacyl-tRNA synthetase family. ProS type 2 subfamily. In terms of assembly, homodimer.

The protein localises to the cytoplasm. The enzyme catalyses tRNA(Pro) + L-proline + ATP = L-prolyl-tRNA(Pro) + AMP + diphosphate. Functionally, catalyzes the attachment of proline to tRNA(Pro) in a two-step reaction: proline is first activated by ATP to form Pro-AMP and then transferred to the acceptor end of tRNA(Pro). The chain is Proline--tRNA ligase from Hyphomonas neptunium (strain ATCC 15444).